Consider the following 136-residue polypeptide: Large ribosomal subunit protein bL17 (136 aa).

This sequence belongs to the bacterial ribosomal protein bL17 family. Part of the 50S ribosomal subunit. Contacts protein L32.

The sequence is that of Large ribosomal subunit protein bL17 from Rhodopseudomonas palustris (strain BisB5).